Reading from the N-terminus, the 311-residue chain is Phosphoribosylaminoimidazole-succinocarboxamide synthase (311 aa).

Belongs to the SAICAR synthetase family.

It catalyses the reaction 5-amino-1-(5-phospho-D-ribosyl)imidazole-4-carboxylate + L-aspartate + ATP = (2S)-2-[5-amino-1-(5-phospho-beta-D-ribosyl)imidazole-4-carboxamido]succinate + ADP + phosphate + 2 H(+). It functions in the pathway purine metabolism; IMP biosynthesis via de novo pathway; 5-amino-1-(5-phospho-D-ribosyl)imidazole-4-carboxamide from 5-amino-1-(5-phospho-D-ribosyl)imidazole-4-carboxylate: step 1/2. The chain is Phosphoribosylaminoimidazole-succinocarboxamide synthase from Aromatoleum aromaticum (strain DSM 19018 / LMG 30748 / EbN1) (Azoarcus sp. (strain EbN1)).